A 382-amino-acid polypeptide reads, in one-letter code: Kelch domain-containing protein 3 (382 aa).

Kelch repeat units follow at residues 25-77 (RVYS…PYMR), 88-138 (TVLL…VLGK), 139-189 (IMYI…TMLG), 191-249 (HMYV…GYNG), and 251-301 (LYIF…IVGD).

In terms of assembly, component of a CRL2(KLHDC3) complex, also named ECS(KLHDC3) complex, composed of CUL2, Elongin BC (ELOB and ELOC), RBX1 and substrate-specific adapter KLHDC3. May form oligomers as a KLHDC3-ELOB-ELOC complex; this interaction is likely autoinhibitory for the E3 ligase complex.

The protein localises to the cytoplasm. It participates in protein modification; protein ubiquitination. Functionally, substrate-recognition component of a Cul2-RING (CRL2) E3 ubiquitin-protein ligase complex of the DesCEND (destruction via C-end degrons) pathway, which recognizes a C-degron located at the extreme C terminus of target proteins, leading to their ubiquitination and degradation. The C-degron recognized by the DesCEND pathway is usually a motif of less than ten residues and can be present in full-length proteins, truncated proteins or proteolytically cleaved forms. The CRL2(KLHDC3) complex specifically recognizes proteins with a glycine (Gly) at the C-terminus, leading to their ubiquitination and degradation: recognizes the C-terminal -Arg-(Xaa)n-Arg-Gly, -Arg-(Xaa)n-Lys-Gly, and -Arg-(Xaa)n-Gln-Gly degrons. The CRL2(KLHDC3) complex mediates ubiquitination and degradation of truncated SELENOV and SEPHS2 selenoproteins produced by failed UGA/Sec decoding, which end with a glycine. May be involved in meiotic recombination process. In Homo sapiens (Human), this protein is Kelch domain-containing protein 3.